Reading from the N-terminus, the 96-residue chain is MSRRCDLTGKAVQTGNLVSHSNHKTRTRFLPNLCNVTLISDVLQRKVRFRVAVAALRSVEHRGGLDAFLAKADDAELSLGARAIKREILKKQAAAS.

Belongs to the bacterial ribosomal protein bL28 family.

In Methylocella silvestris (strain DSM 15510 / CIP 108128 / LMG 27833 / NCIMB 13906 / BL2), this protein is Large ribosomal subunit protein bL28.